The primary structure comprises 58 residues: Large ribosomal subunit protein uL30 (58 aa).

It belongs to the universal ribosomal protein uL30 family. As to quaternary structure, part of the 50S ribosomal subunit.

This is Large ribosomal subunit protein uL30 from Cytophaga hutchinsonii (strain ATCC 33406 / DSM 1761 / CIP 103989 / NBRC 15051 / NCIMB 9469 / D465).